A 158-amino-acid polypeptide reads, in one-letter code: Nascent polypeptide-associated complex subunit beta (158 aa).

2 disordered regions span residues 1–40 (MDQA…DKKL) and 119–158 (ESYQ…SKVE). Basic residues predominate over residues 16-31 (GKGKGTPRRKTKKVHK). The NAC-A/B domain occupies 34 to 99 (GTDDKKLQTS…GEDKELTELV (66 aa)). Residues 137-152 (DDDDDDEIPDLVEGEN) show a composition bias toward acidic residues.

It belongs to the NAC-beta family. Part of the nascent polypeptide-associated complex (NAC), consisting of EGD2 and EGD1. NAC associates with ribosomes via EGD1.

The protein resides in the cytoplasm. Its subcellular location is the nucleus. Its function is as follows. Component of the nascent polypeptide-associated complex (NAC), a dynamic component of the ribosomal exit tunnel, protecting the emerging polypeptides from interaction with other cytoplasmic proteins to ensure appropriate nascent protein targeting. The NAC complex also promotes mitochondrial protein import by enhancing productive ribosome interactions with the outer mitochondrial membrane and blocks the inappropriate interaction of ribosomes translating non-secretory nascent polypeptides with translocation sites in the membrane of the endoplasmic reticulum. EGD1 may act as a transcription factor that exert a negative effect on the expression of several genes that are transcribed by RNA polymerase II. The chain is Nascent polypeptide-associated complex subunit beta (EGD1) from Ajellomyces capsulatus (strain NAm1 / WU24) (Darling's disease fungus).